Consider the following 83-residue polypeptide: Large ribosomal subunit protein bL27 (83 aa).

The disordered stretch occupies residues 1–25 (MAHKKGQGASRNGRDSESKRLGLKV).

It belongs to the bacterial ribosomal protein bL27 family.

The sequence is that of Large ribosomal subunit protein bL27 from Chlamydia trachomatis serovar L2 (strain ATCC VR-902B / DSM 19102 / 434/Bu).